The following is a 214-amino-acid chain: MKAFTQHTGLVAPLDRANVDTDQIIPKQFLKSIKRTGFGPNLFDEWRYLDVGQPYQDNSKRPVNQEFVLNHARYQGASVLLARENFGCGSSREHAPWALDEYGFRSIIAPSFADIFFNNSFKNGLLPIILSDEEVDELFKQVEANPGYQLTIDLQAQAVTRPDGKVLHFEIDAFRKHCLLNGLDDIGLTLQDSDAIKAFEGKHRAGQPWLFRDA.

It belongs to the LeuD family. LeuD type 1 subfamily. As to quaternary structure, heterodimer of LeuC and LeuD.

The enzyme catalyses (2R,3S)-3-isopropylmalate = (2S)-2-isopropylmalate. It participates in amino-acid biosynthesis; L-leucine biosynthesis; L-leucine from 3-methyl-2-oxobutanoate: step 2/4. Functionally, catalyzes the isomerization between 2-isopropylmalate and 3-isopropylmalate, via the formation of 2-isopropylmaleate. The polypeptide is 3-isopropylmalate dehydratase small subunit (Pseudomonas putida (strain GB-1)).